The following is a 398-amino-acid chain: Dual-specificity RNA methyltransferase RlmN (398 aa).

The active-site Proton acceptor is the E119. The Radical SAM core domain maps to 125-364 (EADRATLCVS…TIVRKTRGDD (240 aa)). A disulfide bridge connects residues C132 and C369. The [4Fe-4S] cluster site is built by C139, C143, and C146. S-adenosyl-L-methionine is bound by residues 193–194 (GE), S225, 247–249 (SLH), and N326. C369 functions as the S-methylcysteine intermediate in the catalytic mechanism.

Belongs to the radical SAM superfamily. RlmN family. It depends on [4Fe-4S] cluster as a cofactor.

Its subcellular location is the cytoplasm. The catalysed reaction is adenosine(2503) in 23S rRNA + 2 reduced [2Fe-2S]-[ferredoxin] + 2 S-adenosyl-L-methionine = 2-methyladenosine(2503) in 23S rRNA + 5'-deoxyadenosine + L-methionine + 2 oxidized [2Fe-2S]-[ferredoxin] + S-adenosyl-L-homocysteine. The enzyme catalyses adenosine(37) in tRNA + 2 reduced [2Fe-2S]-[ferredoxin] + 2 S-adenosyl-L-methionine = 2-methyladenosine(37) in tRNA + 5'-deoxyadenosine + L-methionine + 2 oxidized [2Fe-2S]-[ferredoxin] + S-adenosyl-L-homocysteine. Functionally, specifically methylates position 2 of adenine 2503 in 23S rRNA and position 2 of adenine 37 in tRNAs. m2A2503 modification seems to play a crucial role in the proofreading step occurring at the peptidyl transferase center and thus would serve to optimize ribosomal fidelity. The sequence is that of Dual-specificity RNA methyltransferase RlmN from Yersinia pseudotuberculosis serotype O:3 (strain YPIII).